Here is a 363-residue protein sequence, read N- to C-terminus: Putative agmatine deiminase 1 (363 aa).

The Amidino-cysteine intermediate role is filled by cysteine 356.

It belongs to the agmatine deiminase family.

The catalysed reaction is agmatine + H2O = N-carbamoylputrescine + NH4(+). The protein is Putative agmatine deiminase 1 of Listeria monocytogenes serovar 1/2a (strain ATCC BAA-679 / EGD-e).